The chain runs to 387 residues: 8-amino-7-oxononanoate synthase (387 aa).

A substrate-binding site is contributed by Arg-19. A pyridoxal 5'-phosphate-binding site is contributed by 106-107 (GY). Position 131 (His-131) interacts with substrate. The pyridoxal 5'-phosphate site is built by Ser-177, His-205, and Thr-234. Lys-237 carries the N6-(pyridoxal phosphate)lysine modification. Thr-351 contributes to the substrate binding site.

Belongs to the class-II pyridoxal-phosphate-dependent aminotransferase family. BioF subfamily. As to quaternary structure, homodimer. The cofactor is pyridoxal 5'-phosphate.

The catalysed reaction is 6-carboxyhexanoyl-[ACP] + L-alanine + H(+) = (8S)-8-amino-7-oxononanoate + holo-[ACP] + CO2. The protein operates within cofactor biosynthesis; biotin biosynthesis. In terms of biological role, catalyzes the decarboxylative condensation of pimeloyl-[acyl-carrier protein] and L-alanine to produce 8-amino-7-oxononanoate (AON), [acyl-carrier protein], and carbon dioxide. The polypeptide is 8-amino-7-oxononanoate synthase (Methylococcus capsulatus (strain ATCC 33009 / NCIMB 11132 / Bath)).